The primary structure comprises 262 residues: Shikimate dehydrogenase (NADP(+)) (262 aa).

Shikimate is bound by residues 15-17 and threonine 62; that span reads SRS. Residue lysine 66 is the Proton acceptor of the active site. Residue glutamate 78 coordinates NADP(+). Shikimate contacts are provided by asparagine 87 and aspartate 102. Residues 126–130, 150–155, and methionine 214 contribute to the NADP(+) site; these read GAGGA and NRTLAR. Tyrosine 216 lines the shikimate pocket. Residue glycine 236 participates in NADP(+) binding.

Belongs to the shikimate dehydrogenase family. As to quaternary structure, homodimer.

It carries out the reaction shikimate + NADP(+) = 3-dehydroshikimate + NADPH + H(+). The protein operates within metabolic intermediate biosynthesis; chorismate biosynthesis; chorismate from D-erythrose 4-phosphate and phosphoenolpyruvate: step 4/7. Its function is as follows. Involved in the biosynthesis of the chorismate, which leads to the biosynthesis of aromatic amino acids. Catalyzes the reversible NADPH linked reduction of 3-dehydroshikimate (DHSA) to yield shikimate (SA). The polypeptide is Shikimate dehydrogenase (NADP(+)) (Acinetobacter baumannii (strain ACICU)).